Here is a 429-residue protein sequence, read N- to C-terminus: Glutamate-1-semialdehyde 2,1-aminomutase 1 (429 aa).

An N6-(pyridoxal phosphate)lysine modification is found at Lys268.

The protein belongs to the class-III pyridoxal-phosphate-dependent aminotransferase family. HemL subfamily. As to quaternary structure, homodimer. It depends on pyridoxal 5'-phosphate as a cofactor.

Its subcellular location is the cytoplasm. The catalysed reaction is (S)-4-amino-5-oxopentanoate = 5-aminolevulinate. It functions in the pathway porphyrin-containing compound metabolism; protoporphyrin-IX biosynthesis; 5-aminolevulinate from L-glutamyl-tRNA(Glu): step 2/2. The protein is Glutamate-1-semialdehyde 2,1-aminomutase 1 of Listeria innocua serovar 6a (strain ATCC BAA-680 / CLIP 11262).